The sequence spans 171 residues: MLPRAAWSLVLRKGGGGRRGMHSSEGTTRGGGKMSPYTNCYAQRYYPMPEEPFCTELNAEEQALKEKEKGSWTQLTHAEKVALYRLQFNETFAEMNRRSNEWKTVMGCVFFFIGFAALVIWWQRVYVFPPKPITLTDERKAQQLQRMLDMKVNPVQGLASRWDYEKKQWKK.

The transit peptide at 1-28 (MLPRAAWSLVLRKGGGGRRGMHSSEGTT) directs the protein to the mitochondrion. Positions 13–32 (KGGGGRRGMHSSEGTTRGGG) are disordered. The Mitochondrial matrix segment spans residues 29 to 100 (RGGGKMSPYT…TFAEMNRRSN (72 aa)). A helical transmembrane segment spans residues 101–126 (EWKTVMGCVFFFIGFAALVIWWQRVY). Residues 127-171 (VFPPKPITLTDERKAQQLQRMLDMKVNPVQGLASRWDYEKKQWKK) are Mitochondrial intermembrane-facing.

The protein belongs to the cytochrome c oxidase IV family. In terms of assembly, component of the cytochrome c oxidase (complex IV, CIV), a multisubunit enzyme composed of 14 subunits. The complex is composed of a catalytic core of 3 subunits MT-CO1, MT-CO2 and MT-CO3, encoded in the mitochondrial DNA, and 11 supernumerary subunits COX4I1 (or COX4I2), COX5A, COX5B, COX6A1 (or COX6A2), COX6B1 (or COX6B2), COX6C, COX7A2 (or COX7A1), COX7B, COX7C, COX8A and NDUFA4, which are encoded in the nuclear genome. The complex exists as a monomer or a dimer and forms supercomplexes (SCs) in the inner mitochondrial membrane with NADH-ubiquinone oxidoreductase (complex I, CI) and ubiquinol-cytochrome c oxidoreductase (cytochrome b-c1 complex, complex III, CIII), resulting in different assemblies (supercomplex SCI(1)III(2)IV(1) and megacomplex MCI(2)III(2)IV(2)). In terms of tissue distribution, highly expressed in lung.

It is found in the mitochondrion inner membrane. It functions in the pathway energy metabolism; oxidative phosphorylation. Component of the cytochrome c oxidase, the last enzyme in the mitochondrial electron transport chain which drives oxidative phosphorylation. The respiratory chain contains 3 multisubunit complexes succinate dehydrogenase (complex II, CII), ubiquinol-cytochrome c oxidoreductase (cytochrome b-c1 complex, complex III, CIII) and cytochrome c oxidase (complex IV, CIV), that cooperate to transfer electrons derived from NADH and succinate to molecular oxygen, creating an electrochemical gradient over the inner membrane that drives transmembrane transport and the ATP synthase. Cytochrome c oxidase is the component of the respiratory chain that catalyzes the reduction of oxygen to water. Electrons originating from reduced cytochrome c in the intermembrane space (IMS) are transferred via the dinuclear copper A center (CU(A)) of subunit 2 and heme A of subunit 1 to the active site in subunit 1, a binuclear center (BNC) formed by heme A3 and copper B (CU(B)). The BNC reduces molecular oxygen to 2 water molecules using 4 electrons from cytochrome c in the IMS and 4 protons from the mitochondrial matrix. The protein is Cytochrome c oxidase subunit 4 isoform 2, mitochondrial of Homo sapiens (Human).